A 282-amino-acid polypeptide reads, in one-letter code: Hepatitis A virus cellular receptor 2 homolog (282 aa).

The signal sequence occupies residues 1–21 (MFSWLPFSCALLLLQPLPARS). The Ig-like V-type domain maps to 22-131 (LENAYTAEVG…EKLELKLSIT (110 aa)). Topologically, residues 22-194 (LENAYTAEVG…KDSGETIRTA (173 aa)) are extracellular. Intrachain disulfides connect cysteine 38/cysteine 111, cysteine 52/cysteine 63, and cysteine 58/cysteine 110. Glutamine 62 is a binding site for a 1,2-diacyl-sn-glycero-3-phospho-L-serine. N-linked (GlcNAc...) asparagine glycosylation is found at asparagine 74 and asparagine 100. Position 112 (arginine 112) interacts with a 1,2-diacyl-sn-glycero-3-phospho-L-serine. The Ca(2+) site is built by phenylalanine 115 and glycine 117. Methionine 119 lines the a 1,2-diacyl-sn-glycero-3-phospho-L-serine pocket. Asparagine 120 contacts Ca(2+). A disordered region spans residues 138-163 (PAGTAHGDSTTASPRTLTTEGSGSET). Residues 144–163 (GDSTTASPRTLTTEGSGSET) are compositionally biased toward polar residues. The O-linked (GalNAc...) threonine glycan is linked to threonine 147. N-linked (GlcNAc...) asparagine glycosylation occurs at asparagine 173. The helical transmembrane segment at 195-215 (VHIGVGVSAGLALALILGVLI) threads the bilayer. At 216–282 (LKWYSSKKKK…YCYVSSQQPS (67 aa)) the chain is on the cytoplasmic side. Positions 253 to 271 (EENIYTIEENIYEMENSNE) are interaction with BAG6. A Phosphotyrosine; by ITK modification is found at tyrosine 257.

This sequence belongs to the immunoglobulin superfamily. TIM family. In terms of assembly, interacts with HMGB1; impairs HMGB1 binding to B-DNA and likely HMGB1-mediated innate immune response. Interacts with BAG6. Interacts (phosphorylated) with PIK3R1 and PIK3R2. Interacts (not dependent on its phosphorylation status) with FYN. Interacts (in basal state T-cells) with VAV1; AKT1/2, LCP2, ZAP70, SYK, PIK3R1, FYN, SH3BP2 and SH2D2A. Interacts (in activated T-cells) with LCK and PLCG. Interacts with ILF3; this interaction promotes ILF3 ubiquitination and degradation.

Its subcellular location is the membrane. The protein resides in the cell junction. In terms of biological role, cell surface receptor implicated in modulating innate and adaptive immune responses. Generally accepted to have an inhibiting function. Reports on stimulating functions suggest that the activity may be influenced by the cellular context and/or the respective ligand. Regulates macrophage activation. Inhibits T-helper type 1 lymphocyte (Th1)-mediated auto- and alloimmune responses and promotes immunological tolerance. In CD8+ cells attenuates TCR-induced signaling, specifically by blocking NF-kappaB and NFAT promoter activities resulting in the loss of IL-2 secretion. The function may implicate its association with LCK proposed to impair phosphorylation of TCR subunits. In contrast, shown to activate TCR-induced signaling in T-cells probably implicating ZAP70, LCP2, LCK and FYN. Expressed on Treg cells can inhibit Th17 cell responses. Receptor for LGALS9. Binding to LGALS9 is believed to result in suppression of T-cell responses; the resulting apoptosis of antigen-specific cells may implicate HAVCR2 phosphorylation and disruption of its association with BAG6. Binding to LGALS9 is proposed to be involved in innate immune response to intracellular pathogens. Expressed on Th1 cells interacts with LGALS9 expressed on Mycobacterium tuberculosis-infected macrophages to stimulate antibactericidal activity including IL-1 beta secretion and to restrict intracellular bacterial growth. However, the function as receptor for LGALS9 has been challenged. Also reported to enhance CD8+ T cell responses to an acute infection such as by Listeria monocytogenes. Receptor for phosphatidylserine (PtSer); PtSer-binding is calcium-dependent. May recognize PtSer on apoptotic cells leading to their phagocytosis. Mediates the engulfment of apoptotic cells by dendritic cells. Expressed on T-cells, promotes conjugation but not engulfment of apoptotic cells. Expressed on dendritic cells (DCs) positively regulates innate immune response and in synergy with Toll-like receptors promotes secretion of TNF-alpha. In tumor-imfiltrating DCs suppresses nucleic acid-mediated innate immune repsonse by interaction with HMGB1 and interfering with nucleic acid-sensing and trafficking of nucleid acids to endosomes. Can enhance mast cell production of Th2 cytokines Il-4, IL-6 and IL-13. Expressed on natural killer (NK) cells acts as a coreceptor to enhance IFN-gamma production in response to LGALS9. In contrast, shown to suppress NK cell-mediated cytotoxicity. Negatively regulates NK cell function in LPS-induced endotoxic shock. This chain is Hepatitis A virus cellular receptor 2 homolog (Havcr2), found in Rattus norvegicus (Rat).